A 115-amino-acid polypeptide reads, in one-letter code: Large ribosomal subunit protein bL19 (115 aa).

The protein belongs to the bacterial ribosomal protein bL19 family.

Functionally, this protein is located at the 30S-50S ribosomal subunit interface and may play a role in the structure and function of the aminoacyl-tRNA binding site. This is Large ribosomal subunit protein bL19 from Escherichia coli O139:H28 (strain E24377A / ETEC).